The sequence spans 157 residues: Phosphopantetheine adenylyltransferase (157 aa).

Ser-9 serves as a coordination point for substrate. Residues 9 to 10 (SF) and His-17 each bind ATP. Substrate is bound by residues Lys-41, Leu-73, and Lys-87. ATP is bound by residues 88–90 (GLR), Glu-98, and 123–129 (YSYLSSS).

This sequence belongs to the bacterial CoaD family. As to quaternary structure, homohexamer. Mg(2+) serves as cofactor.

The protein resides in the cytoplasm. The enzyme catalyses (R)-4'-phosphopantetheine + ATP + H(+) = 3'-dephospho-CoA + diphosphate. It functions in the pathway cofactor biosynthesis; coenzyme A biosynthesis; CoA from (R)-pantothenate: step 4/5. In terms of biological role, reversibly transfers an adenylyl group from ATP to 4'-phosphopantetheine, yielding dephospho-CoA (dPCoA) and pyrophosphate. In Alkaliphilus metalliredigens (strain QYMF), this protein is Phosphopantetheine adenylyltransferase.